We begin with the raw amino-acid sequence, 504 residues long: Maturase K (504 aa).

The protein belongs to the intron maturase 2 family. MatK subfamily.

It is found in the plastid. Its subcellular location is the chloroplast. In terms of biological role, usually encoded in the trnK tRNA gene intron. Probably assists in splicing its own and other chloroplast group II introns. The protein is Maturase K of Pachira aquatica (Guiana chestnut).